The following is a 1057-amino-acid chain: MPKRNDIKTILVIGSGPIIIGQAAEFDYAGTQACLALKEEGYRVILVNSNPATIMTDKEIADKVYIEPLTHDFIARIIRKEQPDALLPTLGGQTGLNMAIQLHESGVLQDNNVQLLGTELTSIQQAEDREMFRTLMNYLNVPVPESDIVNTVEQAFKFKEQVGYPLIVRPAFTMGGTGGGICHNDEELHEIVSNGLHYSPATQCLLEKSIAGFKEIEYEVMRDKNDNAIVVCNMENIDPVGIHTGDSIVVAPSQTLSDVEYQMLRDVSLKVIRALGIEGGCNVQLALDPHSFDYYIIEVNPRVSRSSALASKATGYPIAKLAAKIAVGLTLDEMLNPITGTSYATFEPTLDYVISKIPRFPFDKFEKGERELGTQMKATGEVMAIGRTYEESLLKAIRSLEYGVHHLGLPNGESFDLDYIKERISHQDDERLFFIGEAIRRGTTLEEIHNMTQIDYFFLHKFQNIIDIEHQLKEHQGDLEYLKYAKDYGFSDKTIAHRFNMTEEEVYQLRMENDIKPVYKMVDTCAAEFESSTPYYYGTYETENESIITDKEKILVLGSGPIRIGQGVEFDYATVHAVWAIQKAGYEAIIVNNNPETVSTDFSISDKLYFEPLTEEDVMNIINLEKPKGVVVQFGGQTAINLADKLAKHGVKILGTSLENLNRAEDRKEFEALLRKINVPQPQGKTATSPEEALANAAEIGYPVVVRPSYVLGGRAMEIVDNDKELENYMTQAVKASPEHPVLVDRYLTGKEIEVDAICDGETVIIPGIMEHIERAGVHSGDSIAVYPPQTLTEDELTTLEDYTIKLAKGLNIIGLINIQFVIAHDGVYVLEVNPRSSRTVPFLSKITDIPMAQLAMRAIIGEKLTDMGYQEGVQPYAEGVFVKAPVFSFNKLKNVDITLGPEMKSTGEVMGKDTTLEKALFKGLTGSGVEVKDHGTVLMTVSDKDKEEVVKLAQRLNEVGYKILATSGTANKLAEYDIPAEVVGKIGGENDLLTRIQNGDVQIVINTMTKGKEVERDGFQIRRTTVENGIPCLTSLDTANALTNVIESMTFTMRQM.

The segment at Met1–Glu401 is carboxyphosphate synthetic domain. The ATP site is built by Arg129, Arg169, Gly175, Gly176, Lys208, Ile210, Glu215, Gly241, Ile242, His243, Gln284, and Glu298. The region spanning Arg133 to Val327 is the ATP-grasp 1 domain. Residues Gln284, Glu298, and Asn300 each contribute to the Mg(2+) site. Residues Gln284, Glu298, and Asn300 each contribute to the Mn(2+) site. The oligomerization domain stretch occupies residues Tyr402 to Ser546. Residues Ile547–Gly929 are carbamoyl phosphate synthetic domain. An ATP-grasp 2 domain is found at Glu671–Ile861. Arg707, Arg746, Leu748, Glu752, Gly777, Val778, His779, Ser780, Gln820, and Glu832 together coordinate ATP. Gln820, Glu832, and Asn834 together coordinate Mg(2+). The Mn(2+) site is built by Gln820, Glu832, and Asn834. The 128-residue stretch at Val930 to Met1057 folds into the MGS-like domain. Residues Val930–Met1057 are allosteric domain.

It belongs to the CarB family. As to quaternary structure, composed of two chains; the small (or glutamine) chain promotes the hydrolysis of glutamine to ammonia, which is used by the large (or ammonia) chain to synthesize carbamoyl phosphate. Tetramer of heterodimers (alpha,beta)4. Mg(2+) serves as cofactor. The cofactor is Mn(2+).

It carries out the reaction hydrogencarbonate + L-glutamine + 2 ATP + H2O = carbamoyl phosphate + L-glutamate + 2 ADP + phosphate + 2 H(+). The catalysed reaction is hydrogencarbonate + NH4(+) + 2 ATP = carbamoyl phosphate + 2 ADP + phosphate + 2 H(+). It functions in the pathway amino-acid biosynthesis; L-arginine biosynthesis; carbamoyl phosphate from bicarbonate: step 1/1. The protein operates within pyrimidine metabolism; UMP biosynthesis via de novo pathway; (S)-dihydroorotate from bicarbonate: step 1/3. Large subunit of the glutamine-dependent carbamoyl phosphate synthetase (CPSase). CPSase catalyzes the formation of carbamoyl phosphate from the ammonia moiety of glutamine, carbonate, and phosphate donated by ATP, constituting the first step of 2 biosynthetic pathways, one leading to arginine and/or urea and the other to pyrimidine nucleotides. The large subunit (synthetase) binds the substrates ammonia (free or transferred from glutamine from the small subunit), hydrogencarbonate and ATP and carries out an ATP-coupled ligase reaction, activating hydrogencarbonate by forming carboxy phosphate which reacts with ammonia to form carbamoyl phosphate. The sequence is that of Carbamoyl phosphate synthase large chain from Staphylococcus aureus (strain bovine RF122 / ET3-1).